We begin with the raw amino-acid sequence, 342 residues long: RNA 3'-terminal phosphate cyclase (342 aa).

Residues Gln103 and 283–287 contribute to the ATP site; that span reads YLADQ. Catalysis depends on His308, which acts as the Tele-AMP-histidine intermediate.

The protein belongs to the RNA 3'-terminal cyclase family. Type 1 subfamily.

The protein localises to the cytoplasm. It carries out the reaction a 3'-end 3'-phospho-ribonucleotide-RNA + ATP = a 3'-end 2',3'-cyclophospho-ribonucleotide-RNA + AMP + diphosphate. In terms of biological role, catalyzes the conversion of 3'-phosphate to a 2',3'-cyclic phosphodiester at the end of RNA. The mechanism of action of the enzyme occurs in 3 steps: (A) adenylation of the enzyme by ATP; (B) transfer of adenylate to an RNA-N3'P to produce RNA-N3'PP5'A; (C) and attack of the adjacent 2'-hydroxyl on the 3'-phosphorus in the diester linkage to produce the cyclic end product. The biological role of this enzyme is unknown but it is likely to function in some aspects of cellular RNA processing. The polypeptide is RNA 3'-terminal phosphate cyclase (Shigella dysenteriae serotype 1 (strain Sd197)).